Reading from the N-terminus, the 709-residue chain is Polyribonucleotide nucleotidyltransferase (709 aa).

Residues D487 and D493 each contribute to the Mg(2+) site. Residues 554–613 (PRIHTMKISSDKIKDVIGKGGAVIRALCEETGTTIEIEDDGTIKIAATEGAAAKEAIRRI) enclose the KH domain. Residues 623 to 691 (GKIYTGKVMR…RQGRIRLSIK (69 aa)) form the S1 motif domain.

This sequence belongs to the polyribonucleotide nucleotidyltransferase family. In terms of assembly, component of the RNA degradosome, which is a multiprotein complex involved in RNA processing and mRNA degradation. Requires Mg(2+) as cofactor.

The protein localises to the cytoplasm. It catalyses the reaction RNA(n+1) + phosphate = RNA(n) + a ribonucleoside 5'-diphosphate. Functionally, involved in mRNA degradation. Catalyzes the phosphorolysis of single-stranded polyribonucleotides processively in the 3'- to 5'-direction. The protein is Polyribonucleotide nucleotidyltransferase of Aliivibrio fischeri (strain ATCC 700601 / ES114) (Vibrio fischeri).